The primary structure comprises 92 residues: Small ribosomal subunit protein uS19 (92 aa).

This sequence belongs to the universal ribosomal protein uS19 family.

Functionally, protein S19 forms a complex with S13 that binds strongly to the 16S ribosomal RNA. The sequence is that of Small ribosomal subunit protein uS19 from Caulobacter vibrioides (strain ATCC 19089 / CIP 103742 / CB 15) (Caulobacter crescentus).